Reading from the N-terminus, the 571-residue chain is Hemagglutinin-neuraminidase (571 aa).

Residues 1-26 (MDRAVSRVALENEEREAKNTWRFVFR) are Intravirion-facing. The helical transmembrane segment at 27-47 (IAILLLIVITLAISAAALVYS) threads the bilayer. Over 48 to 571 (MEASTPGDLV…LVEILKNDGV (524 aa)) the chain is Virion surface. Asn-119 is a glycosylation site (N-linked (GlcNAc...) asparagine; by host). Positions 124 to 152 (GAPVHDPDYIGGIGKELIVDDASDVTSFY) are important for interaction with fusion/F protein. Intrachain disulfides connect Cys-172/Cys-196, Cys-186/Cys-247, and Cys-238/Cys-251. Residues 234-239 (NRKSCS) are involved in neuraminidase activity. 2 N-linked (GlcNAc...) asparagine; by host glycosylation sites follow: Asn-341 and Asn-433. Cystine bridges form between Cys-344/Cys-461 and Cys-455/Cys-465. Residues Asn-481, Asn-508, and Asn-538 are each glycosylated (N-linked (GlcNAc...) asparagine; by host).

Belongs to the paramyxoviruses hemagglutinin-neuraminidase family. Homotetramer; composed of disulfide-linked homodimers. Interacts with F protein trimer. Interacts with host CG-1B; this interaction inhibits viral adsorption and replication rather than internalization.

The protein localises to the virion membrane. Its subcellular location is the host cell membrane. It carries out the reaction Hydrolysis of alpha-(2-&gt;3)-, alpha-(2-&gt;6)-, alpha-(2-&gt;8)- glycosidic linkages of terminal sialic acid residues in oligosaccharides, glycoproteins, glycolipids, colominic acid and synthetic substrates.. In terms of biological role, mediates the viral entry into the host cell together with fusion/F protein. Attaches the virus to sialic acid-containing cell receptors and thereby initiates infection. Binding of HN protein to the receptor induces a conformational change that allows the F protein to trigger virion/cell membranes fusion. Its function is as follows. Neuraminidase activity ensures the efficient spread of the virus by dissociating the mature virions from the neuraminic acid containing glycoproteins. The protein is Hemagglutinin-neuraminidase (HN) of Gallus gallus (Chicken).